The sequence spans 416 residues: L-threonine dehydratase biosynthetic IlvA (416 aa).

Lysine 51 carries the post-translational modification N6-(pyridoxal phosphate)lysine. Pyridoxal 5'-phosphate contacts are provided by residues asparagine 78, 184–188 (GGGGL), and serine 309. The region spanning 333–407 (HYFVINFPQR…FDNRYVNLHG (75 aa)) is the ACT-like domain.

This sequence belongs to the serine/threonine dehydratase family. Homotetramer. It depends on pyridoxal 5'-phosphate as a cofactor.

It catalyses the reaction L-threonine = 2-oxobutanoate + NH4(+). Its pathway is amino-acid biosynthesis; L-isoleucine biosynthesis; 2-oxobutanoate from L-threonine: step 1/1. In terms of biological role, catalyzes the anaerobic formation of alpha-ketobutyrate and ammonia from threonine in a two-step reaction. The first step involved a dehydration of threonine and a production of enamine intermediates (aminocrotonate), which tautomerizes to its imine form (iminobutyrate). Both intermediates are unstable and short-lived. The second step is the nonenzymatic hydrolysis of the enamine/imine intermediates to form 2-ketobutyrate and free ammonia. In the low water environment of the cell, the second step is accelerated by RidA. This chain is L-threonine dehydratase biosynthetic IlvA (ilvA), found in Lactococcus lactis subsp. lactis (strain IL1403) (Streptococcus lactis).